Reading from the N-terminus, the 231-residue chain is Large ribosomal subunit protein uL1 (231 aa).

The protein belongs to the universal ribosomal protein uL1 family. In terms of assembly, part of the 50S ribosomal subunit.

Its function is as follows. Binds directly to 23S rRNA. The L1 stalk is quite mobile in the ribosome, and is involved in E site tRNA release. Protein L1 is also a translational repressor protein, it controls the translation of the L11 operon by binding to its mRNA. In Herminiimonas arsenicoxydans, this protein is Large ribosomal subunit protein uL1.